The chain runs to 370 residues: MEVSNLSGATPGIAFPPGPESCSDSPSSGRSMGSTPGGLILSGREPPFSAFTVLVVTLLVLLIAATFLWNLLVLVTILRVRAFHRVPHNLVASTAVSDVLVAALVMPLSLVSELSAGRRWQLGRSLCHVWISFDVLCCTASIWNVAAIALDRYWTITRHLQYTLRTRRRASALMIAITWALSALIALAPLLFGWGEAYDARLQRCQVSQEPSYAVFSTCGAFYVPLAVVLFVYWKIYKAAKFRFGRRRRAVVPLPATTQAKEAPQESETVFTARCRATVAFQTSGDSWREQKEKRAAMMVGILIGVFVLCWIPFFLTELVSPLCACSLPPIWKSIFLWLGYSNSFFNPLIYTAFNKNYNNAFKSLFTKQR.

Residues 1-36 form a disordered region; it reads MEVSNLSGATPGIAFPPGPESCSDSPSSGRSMGSTP. Residues 1–48 are Extracellular-facing; it reads MEVSNLSGATPGIAFPPGPESCSDSPSSGRSMGSTPGGLILSGREPPF. Asn-5 is a glycosylation site (N-linked (GlcNAc...) asparagine). The segment covering 20–36 has biased composition (low complexity); the sequence is ESCSDSPSSGRSMGSTP. A helical membrane pass occupies residues 49-75; it reads SAFTVLVVTLLVLLIAATFLWNLLVLV. Residues 76–88 lie on the Cytoplasmic side of the membrane; sequence TILRVRAFHRVPH. The chain crosses the membrane as a helical span at residues 89–115; that stretch reads NLVASTAVSDVLVAALVMPLSLVSELS. Topologically, residues 116 to 127 are extracellular; the sequence is AGRRWQLGRSLC. A disulfide bridge connects residues Cys-127 and Cys-205. The helical transmembrane segment at 128-150 threads the bilayer; the sequence is HVWISFDVLCCTASIWNVAAIAL. Asp-134 is a binding site for serotonin. Over 151 to 168 the chain is Cytoplasmic; sequence DRYWTITRHLQYTLRTRR. The helical transmembrane segment at 169–189 threads the bilayer; it reads RASALMIAITWALSALIALAP. The Extracellular portion of the chain corresponds to 190-211; sequence LLFGWGEAYDARLQRCQVSQEP. The helical transmembrane segment at 212 to 233 threads the bilayer; the sequence is SYAVFSTCGAFYVPLAVVLFVY. The Cytoplasmic portion of the chain corresponds to 234-300; it reads WKIYKAAKFR…QKEKRAAMMV (67 aa). A helical transmembrane segment spans residues 301 to 325; the sequence is GILIGVFVLCWIPFFLTELVSPLCA. The Extracellular portion of the chain corresponds to 326-327; the sequence is CS. A helical membrane pass occupies residues 328-352; the sequence is LPPIWKSIFLWLGYSNSFFNPLIYT. The Cytoplasmic portion of the chain corresponds to 353-370; that stretch reads AFNKNYNNAFKSLFTKQR.

The protein belongs to the G-protein coupled receptor 1 family. Brain; in the CA1 region of hippocampus, the medial habenula, and raphe nuclei.

The protein resides in the cell membrane. Functionally, G-protein coupled receptor for 5-hydroxytryptamine (serotonin), a biogenic hormone that functions as a neurotransmitter, a hormone and a mitogen. Also functions as a receptor for ergot alkaloid derivatives and other psychoactive substances. Ligand binding causes a conformation change that triggers signaling via guanine nucleotide-binding proteins (G proteins) and modulates the activity of downstream effectors. Htr5b is coupled to G(i)/G(o) G alpha proteins and mediates inhibitory neurotransmission: signaling inhibits adenylate cyclase activity and activates a phosphatidylinositol-calcium second messenger system that regulates the release of Ca(2+) ions from intracellular stores. This is 5-hydroxytryptamine receptor 5B from Rattus norvegicus (Rat).